Here is a 1059-residue protein sequence, read N- to C-terminus: Disks large-associated protein 2 (1059 aa).

2 disordered regions span residues 31 to 56 and 244 to 311; these read GEPEEEEGGDLAQPGLSFPGPAEEDI and TKSH…SDST. The span at 244-261 shows a compositional bias: polar residues; that stretch reads TKSHSLEGSSKSNINGTK. A compositionally biased stretch (basic and acidic residues) spans 262 to 271; that stretch reads SEGRMDDHHQ. Basic residues predominate over residues 272 to 285; the sequence is SHLSKHSKRSKSKE. 4 positions are modified to phosphoserine: Ser-302, Ser-308, Ser-390, and Ser-456. Disordered stretches follow at residues 446–466 and 632–669; these read GDEESGESDSSPKTSPTVALR and VTAQSSTESTQDAYQDSRAQRMSPWPQDSRGGLYNSMD. Over residues 632-645 the composition is skewed to polar residues; sequence VTAQSSTESTQDAY. Ser-667, Ser-670, Ser-673, and Ser-720 each carry phosphoserine. A disordered region spans residues 723–756; the sequence is VQDSEFPDHQPYPRSDVETATDSDTESRGLREYH. Thr-743 carries the post-translational modification Phosphothreonine. A Phosphoserine modification is found at Ser-745. A compositionally biased stretch (basic and acidic residues) spans 747-756; the sequence is TESRGLREYH. Phosphoserine occurs at positions 776, 811, 983, and 1012. Residues 985–1024 form a disordered region; sequence ERKEERKIPPPIPKKPPKGKFPITREKSLDLPDRQRQEAR. A compositionally biased stretch (basic and acidic residues) spans 1007–1024; sequence ITREKSLDLPDRQRQEAR.

It belongs to the SAPAP family. Interacts with DLG4/PSD-95. As to expression, expressed in various brain areas.

The protein resides in the cell membrane. It localises to the postsynaptic density. The protein localises to the synapse. Its function is as follows. May play a role in the molecular organization of synapses and neuronal cell signaling. Could be an adapter protein linking ion channel to the subsynaptic cytoskeleton. May induce enrichment of PSD-95/SAP90 at the plasma membrane. The sequence is that of Disks large-associated protein 2 from Rattus norvegicus (Rat).